The sequence spans 545 residues: Chaperonin GroEL (545 aa).

Residues 30–33 (TLGP), Lys51, 87–91 (DGTTT), Gly415, and Asp495 contribute to the ATP site.

Belongs to the chaperonin (HSP60) family. As to quaternary structure, forms a cylinder of 14 subunits composed of two heptameric rings stacked back-to-back. Interacts with the co-chaperonin GroES.

Its subcellular location is the cytoplasm. The catalysed reaction is ATP + H2O + a folded polypeptide = ADP + phosphate + an unfolded polypeptide.. Together with its co-chaperonin GroES, plays an essential role in assisting protein folding. The GroEL-GroES system forms a nano-cage that allows encapsulation of the non-native substrate proteins and provides a physical environment optimized to promote and accelerate protein folding. This is Chaperonin GroEL from Shewanella sp. (strain MR-7).